A 257-amino-acid polypeptide reads, in one-letter code: Spindlin-2C (257 aa).

The disordered stretch occupies residues 1 to 47 (MKTPHKKGAAKEQMGEGVGHHIGSTTIKKKKASQKRQRSRSSSRRSI). Over residues 27-43 (IKKKKASQKRQRSRSSS) the composition is skewed to basic residues. Tudor-like domain regions lie at residues 48–97 (VGCR…LELH), 127–176 (IGKA…YQLL), and 208–253 (IGKH…YDLV). Histone H3K4me3 and H3R8me2a binding stretches follow at residues glutamate 136 and 244–246 (DFH).

It belongs to the SPIN/STSY family. Interacts with C11orf84/SPINDOC.

It is found in the nucleus. In terms of biological role, may be involved in the regulation of cell cycle progression. Exhibits H3K4me3-binding activity. The polypeptide is Spindlin-2C (Spin2c) (Mus musculus (Mouse)).